A 120-amino-acid polypeptide reads, in one-letter code: MPNLQEEIYDLIERALFLPMAITIFNRDLAGIEESTLKLKHPYKQLISESLKIAQKDLMEVRKELRKRKIAIRETERDEAFTLYTFVIDGYEENHRYFNPRIREQVSELLTYYLFAPDRL.

Residues 45 to 78 are a coiled coil; that stretch reads QLISESLKIAQKDLMEVRKELRKRKIAIRETERD.

This is an uncharacterized protein from Bacillus subtilis (strain 168).